The following is a 187-amino-acid chain: Ribosome-recycling factor (187 aa).

Belongs to the RRF family.

Its subcellular location is the cytoplasm. In terms of biological role, responsible for the release of ribosomes from messenger RNA at the termination of protein biosynthesis. May increase the efficiency of translation by recycling ribosomes from one round of translation to another. This Methylorubrum populi (strain ATCC BAA-705 / NCIMB 13946 / BJ001) (Methylobacterium populi) protein is Ribosome-recycling factor.